A 111-amino-acid polypeptide reads, in one-letter code: Entry-fusion complex protein OPG086 (111 aa).

A helical; Signal-anchor transmembrane segment spans residues 1 to 21 (MASLLYLILFLLFVCISYYFT). The Virion surface portion of the chain corresponds to 22 to 111 (YYPTNKLQAA…TLLPILLLSK (90 aa)).

The protein belongs to the orthopoxvirus OPG086 family. In terms of assembly, interacts with OPG099/L5. Component of the entry fusion complex (EFC) composed of OPG053, OPG076, OPG086, OPG094, OPG095, OPG099, OPG107, OPG143, OPG104, OPG147 and OPG155. Except for OPG095 and OPG053, each of the EFC proteins is required for assembly or stability of the complex. In terms of processing, unglycosylated because produced in viral factories instead of the classic ER -Golgi route.

The protein resides in the virion membrane. Its function is as follows. Component of the entry fusion complex (EFC), which consists of 11 proteins. During cell infection, this complex mediates entry of the virion core into the host cytoplasm by a two-step mechanism consisting of lipid mixing of the viral and cellular membranes and subsequent pore formation. The chain is Entry-fusion complex protein OPG086 (OPG086) from Vaccinia virus (strain Copenhagen) (VACV).